A 343-amino-acid chain; its full sequence is tRNA N6-adenosine threonylcarbamoyltransferase (343 aa).

Positions 120 and 124 each coordinate Fe cation. Substrate is bound by residues 142 to 146, aspartate 175, glycine 188, aspartate 192, and asparagine 281; that span reads VVSGG. Residue aspartate 310 coordinates Fe cation.

The protein belongs to the KAE1 / TsaD family. The cofactor is Fe(2+).

Its subcellular location is the cytoplasm. The catalysed reaction is L-threonylcarbamoyladenylate + adenosine(37) in tRNA = N(6)-L-threonylcarbamoyladenosine(37) in tRNA + AMP + H(+). Its function is as follows. Required for the formation of a threonylcarbamoyl group on adenosine at position 37 (t(6)A37) in tRNAs that read codons beginning with adenine. Is involved in the transfer of the threonylcarbamoyl moiety of threonylcarbamoyl-AMP (TC-AMP) to the N6 group of A37, together with TsaE and TsaB. TsaD likely plays a direct catalytic role in this reaction. The protein is tRNA N6-adenosine threonylcarbamoyltransferase of Bacillus thuringiensis (strain Al Hakam).